Consider the following 429-residue polypeptide: UDP-N-acetylglucosamine 1-carboxyvinyltransferase (429 aa).

Lysine 22 to asparagine 23 is a binding site for phosphoenolpyruvate. Arginine 102 contacts UDP-N-acetyl-alpha-D-glucosamine. Cysteine 126 serves as the catalytic Proton donor. 2-(S-cysteinyl)pyruvic acid O-phosphothioketal is present on cysteine 126. UDP-N-acetyl-alpha-D-glucosamine contacts are provided by residues arginine 131–leucine 135, aspartate 316, and isoleucine 338.

This sequence belongs to the EPSP synthase family. MurA subfamily.

It is found in the cytoplasm. It catalyses the reaction phosphoenolpyruvate + UDP-N-acetyl-alpha-D-glucosamine = UDP-N-acetyl-3-O-(1-carboxyvinyl)-alpha-D-glucosamine + phosphate. It participates in cell wall biogenesis; peptidoglycan biosynthesis. Cell wall formation. Adds enolpyruvyl to UDP-N-acetylglucosamine. The polypeptide is UDP-N-acetylglucosamine 1-carboxyvinyltransferase (Rhodopseudomonas palustris (strain HaA2)).